Consider the following 193-residue polypeptide: Peptidyl-tRNA hydrolase (193 aa).

Tyr-17 contributes to the tRNA binding site. His-22 serves as the catalytic Proton acceptor. The tRNA site is built by Tyr-68, Asn-70, and Asn-116.

Belongs to the PTH family. As to quaternary structure, monomer.

The protein resides in the cytoplasm. It catalyses the reaction an N-acyl-L-alpha-aminoacyl-tRNA + H2O = an N-acyl-L-amino acid + a tRNA + H(+). Hydrolyzes ribosome-free peptidyl-tRNAs (with 1 or more amino acids incorporated), which drop off the ribosome during protein synthesis, or as a result of ribosome stalling. In terms of biological role, catalyzes the release of premature peptidyl moieties from peptidyl-tRNA molecules trapped in stalled 50S ribosomal subunits, and thus maintains levels of free tRNAs and 50S ribosomes. The polypeptide is Peptidyl-tRNA hydrolase (Acinetobacter baumannii (strain AB0057)).